Here is a 72-residue protein sequence, read N- to C-terminus: SAPAQWKLWLVMDPRTVMIGTAAWLGVLALLIHFLLLGTERFNWIDTGLKEQKATAAAQAAITPAPVTAAAK.

The Cytoplasmic segment spans residues 1–16 (SAPAQWKLWLVMDPRT). Residues 17 to 37 (VMIGTAAWLGVLALLIHFLLL) form a helical membrane-spanning segment. His33 is an a bacteriochlorophyll binding site. Residues 38–72 (GTERFNWIDTGLKEQKATAAAQAAITPAPVTAAAK) are Periplasmic-facing.

This sequence belongs to the antenna complex alpha subunit family. In terms of assembly, the core complex is formed by different alpha and beta chains, binding bacteriochlorophyll molecules, and arranged most probably in tetrameric structures disposed around the reaction center. The non-pigmented gamma chains may constitute additional components.

It localises to the cell inner membrane. In terms of biological role, antenna complexes are light-harvesting systems, which transfer the excitation energy to the reaction centers. The chain is Light-harvesting polypeptide B-885 alpha-1 chain from Rhodocyclus tenuis (Rhodospirillum tenue).